The chain runs to 201 residues: Small ribosomal subunit protein uS4 (201 aa).

The disordered stretch occupies residues 1–42; it reads MARYTGPVTRKSRRLGTDLVGGDQSFEKRPYPPGQHGRARIK. An S4 RNA-binding domain is found at 91-157; the sequence is SRLDNVVYRA…VPFQIARETA (67 aa).

The protein belongs to the universal ribosomal protein uS4 family. In terms of assembly, part of the 30S ribosomal subunit. Contacts protein S5. The interaction surface between S4 and S5 is involved in control of translational fidelity.

One of the primary rRNA binding proteins, it binds directly to 16S rRNA where it nucleates assembly of the body of the 30S subunit. Functionally, with S5 and S12 plays an important role in translational accuracy. This chain is Small ribosomal subunit protein uS4, found in Mycobacterium ulcerans (strain Agy99).